The sequence spans 572 residues: Probable D-xylulose kinase A (572 aa).

Positions 95, 166, 282, and 283 each coordinate substrate. ATP-binding positions include tryptophan 365, 470 to 471, and asparagine 474; that span reads GG.

The protein belongs to the FGGY kinase family.

The protein resides in the cytoplasm. The enzyme catalyses D-xylulose + ATP = D-xylulose 5-phosphate + ADP + H(+). Functionally, highly specific D-xylulose kinase which participates in the catabolism of xylose. Xylose is a major component of hemicelluloses such as xylan. Most fungi utilize D-xylose via three enzymatic reactions, xylose reductase (XR), xylitol dehydrogenase (XDH), and xylulokinase, to form xylulose 5-phosphate, which enters pentose phosphate pathway. The sequence is that of Probable D-xylulose kinase A (xkiA) from Aspergillus oryzae (strain ATCC 42149 / RIB 40) (Yellow koji mold).